The chain runs to 180 residues: Large ribosomal subunit protein uL6 (180 aa).

The protein belongs to the universal ribosomal protein uL6 family. As to quaternary structure, part of the 50S ribosomal subunit.

This protein binds to the 23S rRNA, and is important in its secondary structure. It is located near the subunit interface in the base of the L7/L12 stalk, and near the tRNA binding site of the peptidyltransferase center. This chain is Large ribosomal subunit protein uL6, found in Clostridium botulinum (strain Okra / Type B1).